The sequence spans 380 residues: MTKPLCIALVAGEASGDILGSGLMRALKVRHPDIRFIGVGGPLMEAEGMQSYFPMERLSVMGLVEVLGRLRELLARRKLLVQTLINEKPDVFIGIDAPDFTLNIELQLRRAGIKTVHYVSPSVWAWRQKRVLKIREGCDLMLTLLPFEARFYEEKGVPVRFVGHPLADTIPLESYRAAARAGLGLAQEAPVVALMPGSRGGEVGRLGGLFFDAAELLLAQRPGLRFVLPCASPQRRAQVEQLLQGRNLPVTLLDGQSHVALAACDAVLIASGTATLEALLYKRPMVVAYRLAPLTFWILKRMVKSPYVSLPNLLAQRLLVPELLQDDATPEALARTLLPLIDDGQAQTAGFDAIHRILRRDASNQAADAVLSLLGQSSSQ.

It belongs to the LpxB family.

It catalyses the reaction a lipid X + a UDP-2-N,3-O-bis[(3R)-3-hydroxyacyl]-alpha-D-glucosamine = a lipid A disaccharide + UDP + H(+). It participates in bacterial outer membrane biogenesis; LPS lipid A biosynthesis. Its function is as follows. Condensation of UDP-2,3-diacylglucosamine and 2,3-diacylglucosamine-1-phosphate to form lipid A disaccharide, a precursor of lipid A, a phosphorylated glycolipid that anchors the lipopolysaccharide to the outer membrane of the cell. The chain is Lipid-A-disaccharide synthase from Pseudomonas savastanoi pv. phaseolicola (strain 1448A / Race 6) (Pseudomonas syringae pv. phaseolicola (strain 1448A / Race 6)).